Reading from the N-terminus, the 242-residue chain is Ribonuclease PH (242 aa).

Phosphate is bound by residues R86 and 124 to 126 (GTR).

It belongs to the RNase PH family. In terms of assembly, homohexameric ring arranged as a trimer of dimers.

The enzyme catalyses tRNA(n+1) + phosphate = tRNA(n) + a ribonucleoside 5'-diphosphate. Functionally, phosphorolytic 3'-5' exoribonuclease that plays an important role in tRNA 3'-end maturation. Removes nucleotide residues following the 3'-CCA terminus of tRNAs; can also add nucleotides to the ends of RNA molecules by using nucleoside diphosphates as substrates, but this may not be physiologically important. Probably plays a role in initiation of 16S rRNA degradation (leading to ribosome degradation) during starvation. This Caulobacter sp. (strain K31) protein is Ribonuclease PH.